The following is a 395-amino-acid chain: Putative pyridoxal phosphate-dependent acyltransferase (395 aa).

110-111 (GF) is a pyridoxal 5'-phosphate binding site. Residue His-135 participates in substrate binding. Pyridoxal 5'-phosphate is bound by residues Ser-185, 210–213 (DDAH), and 240–243 (TLSK). N6-(pyridoxal phosphate)lysine is present on Lys-243. Residue Thr-357 coordinates substrate.

Belongs to the class-II pyridoxal-phosphate-dependent aminotransferase family. Homodimer. Pyridoxal 5'-phosphate is required as a cofactor.

This is Putative pyridoxal phosphate-dependent acyltransferase from Staphylococcus aureus (strain MRSA252).